A 1030-amino-acid polypeptide reads, in one-letter code: MMS19 nucleotide excision repair protein homolog (1030 aa).

At Ala2 the chain carries N-acetylalanine. 4 HEAT repeats span residues 866-904, 908-946, 949-987, and 990-1028; these read QRFF…RLPK, LPEL…EAPQ, SLHV…LPTP, and LPYK…LGSP. The residue at position 1027 (Ser1027) is a Phosphoserine.

This sequence belongs to the MET18/MMS19 family. Component of the CIA complex. In the CIA complex, interacts directly with CIAO2B and CIAO3. Component of the MMXD complex, composed of CIAO1, ERCC2, CIAO2B, MMS19 and SLC25A5. Interacts with CIAO2B; the interaction is direct. Interacts with ERCC2/XPD; the interaction is direct. Interacts with ERCC3/XPB and NCOA3/RAC3. Interacts with RTEL1; the interaction mediates the association of RTEL1 with the CIA complex. Interacts with BRIP1. Interacts with KIF4A; the interaction facilitates the transfer of Fe-S clusters to KIF4A to ensure proper localization of KIF4A to the mitotic machinery components. Interacts with CCDC117; the interaction is indirect. In terms of processing, ubiquitinated; undergoes 'Lys-48'-linked polyubiquitination.

Its subcellular location is the nucleus. It localises to the cytoplasm. The protein resides in the cytoskeleton. It is found in the spindle. Functionally, key component of the cytosolic iron-sulfur protein assembly (CIA) complex, a multiprotein complex that mediates the incorporation of iron-sulfur cluster into apoproteins specifically involved in DNA metabolism and genomic integrity. In the CIA complex, MMS19 acts as an adapter between early-acting CIA components and a subset of cellular target Fe/S proteins such as ERCC2/XPD, FANCJ and RTEL1, thereby playing a key role in nucleotide excision repair (NER), homologous recombination-mediated double-strand break DNA repair, DNA replication and RNA polymerase II (POL II) transcription. As a CIA complex component and in collaboration with CIAO1 and CIAO2, binds to and facilitates the assembly of most cytosolic-nuclear Fe/S proteins. As part of the mitotic spindle-associated MMXD complex, plays a role in chromosome segregation, probably by facilitating iron-sulfur cluster assembly into ERCC2/XPD. Together with CIAO2, facilitates the transfer of Fe-S clusters to the motor protein KIF4A, which ensures proper localization of KIF4A to mitotic machinery components to promote the progression of mitosis. Indirectly acts as a transcriptional coactivator of estrogen receptor (ER), via its role in iron-sulfur insertion into some component of the TFIIH-machinery. This Bos taurus (Bovine) protein is MMS19 nucleotide excision repair protein homolog.